Here is a 156-residue protein sequence, read N- to C-terminus: Ribonuclease pancreatic (156 aa).

A signal peptide spans 1 to 28 (MALEKSLALLPLLVLVLLVLGWVQPSLG). Substrate is bound by residues Lys-35 and Arg-38. Residue His-40 is the Proton acceptor of the active site. Cystine bridges form between Cys-54/Cys-112, Cys-68/Cys-123, Cys-86/Cys-138, and Cys-93/Cys-100. Asn-62 carries N-linked (GlcNAc...) asparagine glycosylation. Residue 69-73 (KPVNT) participates in substrate binding. N-linked (GlcNAc...) asparagine glycosylation is present at Asn-90. Positions 94 and 113 each coordinate substrate. His-147 functions as the Proton donor in the catalytic mechanism.

The protein belongs to the pancreatic ribonuclease family. As to quaternary structure, monomer. Interacts with and forms tight 1:1 complexes with RNH1. Dimerization of two such complexes may occur. Interaction with RNH1 inhibits this protein.

The protein localises to the secreted. It catalyses the reaction an [RNA] containing cytidine + H2O = an [RNA]-3'-cytidine-3'-phosphate + a 5'-hydroxy-ribonucleotide-3'-[RNA].. The catalysed reaction is an [RNA] containing uridine + H2O = an [RNA]-3'-uridine-3'-phosphate + a 5'-hydroxy-ribonucleotide-3'-[RNA].. Endonuclease that catalyzes the cleavage of RNA on the 3' side of pyrimidine nucleotides. Acts on single-stranded and double-stranded RNA. This chain is Ribonuclease pancreatic (RNASE1), found in Lagothrix lagotricha (Brown woolly monkey).